The chain runs to 376 residues: Lipid-A-disaccharide synthase (376 aa).

Belongs to the LpxB family.

The catalysed reaction is a lipid X + a UDP-2-N,3-O-bis[(3R)-3-hydroxyacyl]-alpha-D-glucosamine = a lipid A disaccharide + UDP + H(+). Its pathway is bacterial outer membrane biogenesis; LPS lipid A biosynthesis. Condensation of UDP-2,3-diacylglucosamine and 2,3-diacylglucosamine-1-phosphate to form lipid A disaccharide, a precursor of lipid A, a phosphorylated glycolipid that anchors the lipopolysaccharide to the outer membrane of the cell. This chain is Lipid-A-disaccharide synthase, found in Hydrogenovibrio crunogenus (strain DSM 25203 / XCL-2) (Thiomicrospira crunogena).